Consider the following 393-residue polypeptide: Autophagy-related protein 18c (393 aa).

WD repeat units lie at residues 27–65 (KEEA…ETFR), 70–114 (DGGF…CISE), 199–239 (AHDS…RLQE), and 244–283 (VDRA…VGED).

This sequence belongs to the WD repeat PROPPIN family. As to quaternary structure, component of the PI(3,5)P2 regulatory complex at least composed of ATG18, SAC/FIG4, FAB1 and VAC14. As to expression, expressed in roots, stems, flowers and leaves.

The protein localises to the preautophagosomal structure membrane. It localises to the vacuole membrane. Its function is as follows. The PI(3,5)P2 regulatory complex regulates both the synthesis and turnover of phosphatidylinositol 3,5-bisphosphate (PtdIns(3,5)P2). Required for autophagy. The protein is Autophagy-related protein 18c (ATG18C) of Arabidopsis thaliana (Mouse-ear cress).